A 248-amino-acid chain; its full sequence is Ribonuclease PH (248 aa).

Phosphate is bound by residues R86 and G124–R126.

Belongs to the RNase PH family. In terms of assembly, homohexameric ring arranged as a trimer of dimers.

It carries out the reaction tRNA(n+1) + phosphate = tRNA(n) + a ribonucleoside 5'-diphosphate. In terms of biological role, phosphorolytic 3'-5' exoribonuclease that plays an important role in tRNA 3'-end maturation. Removes nucleotide residues following the 3'-CCA terminus of tRNAs; can also add nucleotides to the ends of RNA molecules by using nucleoside diphosphates as substrates, but this may not be physiologically important. Probably plays a role in initiation of 16S rRNA degradation (leading to ribosome degradation) during starvation. The chain is Ribonuclease PH from Listeria innocua serovar 6a (strain ATCC BAA-680 / CLIP 11262).